The primary structure comprises 531 residues: NADH-quinone oxidoreductase subunit N (531 aa).

14 helical membrane passes run 8–28 (VEYF…AGVL), 41–61 (AQVT…IVVA), 81–101 (ATLF…VFMA), 146–166 (GATQ…MMVF), 172–192 (LLTM…MCGL), 208–228 (FLLG…LYGA), 250–270 (ALAG…AVPF), 282–302 (PTPI…GALL), 318–338 (PVLW…AVNQ), 350–370 (VAHV…GLSA), 372–392 (LFYL…VGLV), 418–438 (IVGV…LTSG), 453–473 (GAVP…YFYV), and 500–520 (AAIA…QPVL).

Belongs to the complex I subunit 2 family. As to quaternary structure, NDH-1 is composed of 14 different subunits. Subunits NuoA, H, J, K, L, M, N constitute the membrane sector of the complex.

It is found in the cell membrane. It catalyses the reaction a quinone + NADH + 5 H(+)(in) = a quinol + NAD(+) + 4 H(+)(out). Its function is as follows. NDH-1 shuttles electrons from NADH, via FMN and iron-sulfur (Fe-S) centers, to quinones in the respiratory chain. The immediate electron acceptor for the enzyme in this species is believed to be a menaquinone. Couples the redox reaction to proton translocation (for every two electrons transferred, four hydrogen ions are translocated across the cytoplasmic membrane), and thus conserves the redox energy in a proton gradient. The sequence is that of NADH-quinone oxidoreductase subunit N from Mycobacterium bovis (strain ATCC BAA-935 / AF2122/97).